The primary structure comprises 89 residues: Large ribosomal subunit protein uL30 (89 aa).

This sequence belongs to the universal ribosomal protein uL30 family. As to quaternary structure, part of the 50S ribosomal subunit.

The protein is Large ribosomal subunit protein uL30 of Myxococcus xanthus (strain DK1622).